Here is a 115-residue protein sequence, read N- to C-terminus: uncharacterized protein (115 aa).

3 consecutive transmembrane segments (helical) span residues 6-26 (ILII…PFMV), 43-63 (ALSC…IHIL), and 84-104 (IFKV…VLVQ).

It belongs to the AzlD/HI_1737/HP1330 family.

Its subcellular location is the cell membrane. This is an uncharacterized protein from Helicobacter pylori (strain ATCC 700392 / 26695) (Campylobacter pylori).